The primary structure comprises 429 residues: Adenylosuccinate synthetase (429 aa).

GTP-binding positions include 13–19 (GDEGKGK) and 41–43 (GHT). D14 functions as the Proton acceptor in the catalytic mechanism. D14 and G41 together coordinate Mg(2+). Residues 14–17 (DEGK), 39–42 (NAGH), T130, R144, Q225, T240, and R304 each bind IMP. Catalysis depends on H42, which acts as the Proton donor. Position 300–306 (300–306 (ATTGRAR)) interacts with substrate. GTP-binding positions include R306, 332 to 334 (KLD), and 413 to 415 (STG).

This sequence belongs to the adenylosuccinate synthetase family. In terms of assembly, homodimer. Mg(2+) is required as a cofactor.

The protein resides in the cytoplasm. The enzyme catalyses IMP + L-aspartate + GTP = N(6)-(1,2-dicarboxyethyl)-AMP + GDP + phosphate + 2 H(+). The protein operates within purine metabolism; AMP biosynthesis via de novo pathway; AMP from IMP: step 1/2. Plays an important role in the de novo pathway of purine nucleotide biosynthesis. Catalyzes the first committed step in the biosynthesis of AMP from IMP. The chain is Adenylosuccinate synthetase from Pseudomonas fluorescens (strain Pf0-1).